A 498-amino-acid chain; its full sequence is uncharacterized protein (498 aa).

Residues 1–26 (MEESSMAQASLICLLLSFSIIMLSNA) form the signal peptide. The Extracellular segment spans residues 27 to 441 (ADISIDCGSS…GEEKSSSNLA (415 aa)). 4 N-linked (GlcNAc...) asparagine glycosylation sites follow: asparagine 44, asparagine 150, asparagine 354, and asparagine 357. A disordered region spans residues 351-439 (GSGNGTNSTS…KSGEEKSSSN (89 aa)). Over residues 362–414 (SGGGSPSPGGGSGSPPSTGGGSGSPPSTGGGGGSPSKGGGGGKSGGSNNGDGG) the composition is skewed to gly residues. The span at 418 to 436 (ASEDEKSADSSGKSGEEKS) shows a compositional bias: basic and acidic residues. A helical transmembrane segment spans residues 442–462 (LPLGISLPTLLSLGAGGWGVW). The Cytoplasmic portion of the chain corresponds to 463-498 (KYFIKPRRHPESELPLKQNISLQVNMGNATVVNAGQ).

The protein resides in the membrane. This is an uncharacterized protein from Arabidopsis thaliana (Mouse-ear cress).